Consider the following 226-residue polypeptide: EEF1A lysine methyltransferase 3 (226 aa).

Residues Trp-57, 83–85, Asp-104, Trp-133, and Ala-150 contribute to the S-adenosyl-L-methionine site; that span reads GAG.

This sequence belongs to the methyltransferase superfamily. METTL21 family. As to quaternary structure, interacts with members of the heat shock protein 70 and 90 families and of the TCP-1 chaperonin family, as well as with HSPD1, STIP1 and tubulin; at least some of these proteins may be methylation substrates.

It is found in the cytoplasm. The protein localises to the cytoskeleton. Its subcellular location is the microtubule organizing center. It localises to the centrosome. The catalysed reaction is L-lysyl-[protein] + 3 S-adenosyl-L-methionine = N(6),N(6),N(6)-trimethyl-L-lysyl-[protein] + 3 S-adenosyl-L-homocysteine + 3 H(+). The enzyme catalyses L-lysyl-[protein] + S-adenosyl-L-methionine = N(6)-methyl-L-lysyl-[protein] + S-adenosyl-L-homocysteine + H(+). It catalyses the reaction N(6)-methyl-L-lysyl-[protein] + S-adenosyl-L-methionine = N(6),N(6)-dimethyl-L-lysyl-[protein] + S-adenosyl-L-homocysteine + H(+). It carries out the reaction N(6),N(6)-dimethyl-L-lysyl-[protein] + S-adenosyl-L-methionine = N(6),N(6),N(6)-trimethyl-L-lysyl-[protein] + S-adenosyl-L-homocysteine + H(+). In terms of biological role, protein-lysine methyltransferase that selectively mono-, di- and trimethylates 'Lys-165' of the translation elongation factors EEF1A1 and EEF1A2 in an aminoacyl-tRNA and GTP-dependent manner. EEF1A1 methylation by EEF1AKMT3 is dynamic as well as inducible by stress conditions, such as ER-stress, and plays a regulatory role on mRNA translation. The polypeptide is EEF1A lysine methyltransferase 3 (Homo sapiens (Human)).